Consider the following 627-residue polypeptide: 1-deoxy-D-xylulose-5-phosphate synthase (627 aa).

Thiamine diphosphate is bound by residues H74 and 115 to 117; that span reads GHA. Residue D146 participates in Mg(2+) binding. Thiamine diphosphate-binding positions include 147–148, N175, F284, and E364; that span reads AA. Residue N175 participates in Mg(2+) binding.

It belongs to the transketolase family. DXPS subfamily. As to quaternary structure, homodimer. Mg(2+) serves as cofactor. It depends on thiamine diphosphate as a cofactor.

It carries out the reaction D-glyceraldehyde 3-phosphate + pyruvate + H(+) = 1-deoxy-D-xylulose 5-phosphate + CO2. The protein operates within metabolic intermediate biosynthesis; 1-deoxy-D-xylulose 5-phosphate biosynthesis; 1-deoxy-D-xylulose 5-phosphate from D-glyceraldehyde 3-phosphate and pyruvate: step 1/1. Its function is as follows. Catalyzes the acyloin condensation reaction between C atoms 2 and 3 of pyruvate and glyceraldehyde 3-phosphate to yield 1-deoxy-D-xylulose-5-phosphate (DXP). This chain is 1-deoxy-D-xylulose-5-phosphate synthase, found in Acidobacterium capsulatum (strain ATCC 51196 / DSM 11244 / BCRC 80197 / JCM 7670 / NBRC 15755 / NCIMB 13165 / 161).